A 245-amino-acid polypeptide reads, in one-letter code: Probable phosphatase YcdX (245 aa).

Zn(2+) is bound by residues histidine 7, histidine 9, histidine 15, histidine 40, glutamate 73, histidine 101, histidine 131, aspartate 192, and histidine 194.

Belongs to the PHP family. In terms of assembly, homotrimer. It depends on Zn(2+) as a cofactor.

The sequence is that of Probable phosphatase YcdX from Salmonella arizonae (strain ATCC BAA-731 / CDC346-86 / RSK2980).